A 573-amino-acid polypeptide reads, in one-letter code: Mitochondrial distribution and morphology protein 34 (573 aa).

Positions 1–195 (MAFNFNWSPL…LPAIIHRLSL (195 aa)) constitute an SMP-LTD domain. Disordered stretches follow at residues 301–326 (EGLG…SSPL), 349–433 (FSGY…RFPN), 499–521 (SREK…ITDA), and 550–573 (LVNN…AYGQ). Residues 306-316 (GLMSPGSPALS) are compositionally biased toward low complexity. Basic residues predominate over residues 360–373 (RHTKARPTKKRKKR). Positions 374 to 385 (VVDLRKQSKPTD) are enriched in basic and acidic residues. The segment covering 396–409 (TETSTASTTFSSST) has biased composition (low complexity).

It belongs to the MDM34 family. As to quaternary structure, component of the ER-mitochondria encounter structure (ERMES) or MDM complex, composed of MMM1, MDM10, MDM12 and MDM34.

It is found in the mitochondrion outer membrane. Component of the ERMES/MDM complex, which serves as a molecular tether to connect the endoplasmic reticulum (ER) and mitochondria. Components of this complex are involved in the control of mitochondrial shape and protein biogenesis, and function in nonvesicular lipid trafficking between the ER and mitochondria. MDM34 is required for the interaction of the ER-resident membrane protein MMM1 and the outer mitochondrial membrane-resident beta-barrel protein MDM10. In Uncinocarpus reesii (strain UAMH 1704), this protein is Mitochondrial distribution and morphology protein 34.